The sequence spans 301 residues: Sulfate adenylyltransferase subunit 2 (301 aa).

The protein belongs to the PAPS reductase family. CysD subfamily. In terms of assembly, heterodimer composed of CysD, the smaller subunit, and CysN.

The catalysed reaction is sulfate + ATP + H(+) = adenosine 5'-phosphosulfate + diphosphate. Its pathway is sulfur metabolism; hydrogen sulfide biosynthesis; sulfite from sulfate: step 1/3. In terms of biological role, with CysN forms the ATP sulfurylase (ATPS) that catalyzes the adenylation of sulfate producing adenosine 5'-phosphosulfate (APS) and diphosphate, the first enzymatic step in sulfur assimilation pathway. APS synthesis involves the formation of a high-energy phosphoric-sulfuric acid anhydride bond driven by GTP hydrolysis by CysN coupled to ATP hydrolysis by CysD. In Geobacter metallireducens (strain ATCC 53774 / DSM 7210 / GS-15), this protein is Sulfate adenylyltransferase subunit 2.